The sequence spans 122 residues: uncharacterized protein (122 aa).

Belongs to the IIV-6 115R family.

This is an uncharacterized protein from Acheta domesticus (House cricket).